A 248-amino-acid polypeptide reads, in one-letter code: Ubiquinone/menaquinone biosynthesis C-methyltransferase UbiE (248 aa).

The S-adenosyl-L-methionine site is built by Ser-68 and Asp-92.

Belongs to the class I-like SAM-binding methyltransferase superfamily. MenG/UbiE family.

It carries out the reaction a 2-demethylmenaquinol + S-adenosyl-L-methionine = a menaquinol + S-adenosyl-L-homocysteine + H(+). The enzyme catalyses a 2-methoxy-6-(all-trans-polyprenyl)benzene-1,4-diol + S-adenosyl-L-methionine = a 5-methoxy-2-methyl-3-(all-trans-polyprenyl)benzene-1,4-diol + S-adenosyl-L-homocysteine + H(+). It participates in quinol/quinone metabolism; menaquinone biosynthesis; menaquinol from 1,4-dihydroxy-2-naphthoate: step 2/2. The protein operates within cofactor biosynthesis; ubiquinone biosynthesis. Its function is as follows. Methyltransferase required for the conversion of demethylmenaquinol (DMKH2) to menaquinol (MKH2) and the conversion of 2-polyprenyl-6-methoxy-1,4-benzoquinol (DDMQH2) to 2-polyprenyl-3-methyl-6-methoxy-1,4-benzoquinol (DMQH2). In Rickettsia conorii (strain ATCC VR-613 / Malish 7), this protein is Ubiquinone/menaquinone biosynthesis C-methyltransferase UbiE.